The primary structure comprises 658 residues: Alkyldihydroxyacetonephosphate synthase, peroxisomal (658 aa).

Disordered stretches follow at residues 1-41 and 63-86; these read MAEA…LRVL and AASAATAAPTATPAAQESGTIPKK. The transit peptide at 1–58 directs the protein to the peroxisome; it reads MAEAAAAAGGTGLGAGASYGSAADRDRDPDPDRAGRRLRVLSGHLLGRPREALSTNEC. A compositionally biased stretch (basic and acidic residues) spans 23 to 35; the sequence is ADRDRDPDPDRAG. The segment covering 63-77 has biased composition (low complexity); that stretch reads AASAATAAPTATPAA. The residue at position 65 (serine 65) is a Phosphoserine. Threonine 74 carries the post-translational modification Phosphothreonine. Position 102 is an N6-acetyllysine (lysine 102). The region spanning 202 to 384 is the FAD-binding PCMH-type domain; it reads FERIPDIVLW…TEATIKIRPV (183 aa). FAD is bound by residues 234-240, 303-309, and 316-319; these read PIGGGTS, DSLEFST, and TRAS. Lysine 347 is modified (N6-acetyllysine). 368-374 lines the FAD pocket; sequence EGTLGVI. Substrate is bound at residue arginine 515. Tyrosine 578 serves as the catalytic Proton donor/acceptor. 2 important for enzyme activity regions span residues 615-617 and 654-658; these read HHH and NRNLL.

The protein belongs to the FAD-binding oxidoreductase/transferase type 4 family. In terms of assembly, homodimer. FAD serves as cofactor.

Its subcellular location is the peroxisome membrane. The protein resides in the peroxisome. It catalyses the reaction a long chain fatty alcohol + a 1-acylglycerone 3-phosphate = a 1-O-alkylglycerone 3-phosphate + a long-chain fatty acid + H(+). It carries out the reaction hexadecan-1-ol + 1-hexadecanoylglycerone 3-phosphate = 1-O-hexadecylglycerone 3-phosphate + hexadecanoate + H(+). The enzyme catalyses 1-hexadecanoylglycerone 3-phosphate + a long-chain fatty acid = a 1-acylglycerone 3-phosphate + hexadecanoate. It functions in the pathway glycerolipid metabolism; ether lipid biosynthesis. Catalyzes the exchange of the acyl chain in acyl-dihydroxyacetonephosphate (acyl-DHAP) for a long chain fatty alcohol, yielding the first ether linked intermediate, i.e. alkyl-dihydroxyacetonephosphate (alkyl-DHAP), in the pathway of ether lipid biosynthesis. This is Alkyldihydroxyacetonephosphate synthase, peroxisomal (AGPS) from Homo sapiens (Human).